Here is a 159-residue protein sequence, read N- to C-terminus: Bacterioferritin (159 aa).

The Ferritin-like diiron domain maps to 1-145 (MQGDPDVLRL…TQLALMGQLG (145 aa)). The Fe cation site is built by Glu18 and Glu51. Met52 lines the heme b pocket. Residues His54, Glu94, Glu127, and His130 each contribute to the Fe cation site.

Belongs to the bacterioferritin family. In terms of assembly, homooligomer of 24 subunits, arranged as 12 dimers, that are packed together to form an approximately spherical molecule with a central cavity, in which large amounts of iron can be deposited. It depends on heme b as a cofactor.

The protein localises to the cytoplasm. It localises to the cytosol. The protein resides in the membrane. It carries out the reaction 4 Fe(2+) + O2 + 4 H(+) = 4 Fe(3+) + 2 H2O. The enzyme catalyses Fe(2+)(in) = Fe(2+)(out). In terms of biological role, iron-storage protein, whose ferroxidase center binds Fe(2+), oxidizes it using dioxygen to Fe(3+), and participates in the subsequent Fe(3+) oxide mineral core formation within the central cavity of the BFR protein shell. Probably plays a crucial role in the intracellular existence of this organism by functioning as a temporary depository for iron in iron deprivation. The sequence is that of Bacterioferritin (bfr) from Mycobacterium leprae (strain TN).